We begin with the raw amino-acid sequence, 138 residues long: Large ribosomal subunit protein uL16 (138 aa).

Residues 1–17 show a composition bias toward basic residues; that stretch reads MLIPRKVKHRKQHHPRQ. The tract at residues 1 to 22 is disordered; that stretch reads MLIPRKVKHRKQHHPRQRGIAS.

This sequence belongs to the universal ribosomal protein uL16 family. In terms of assembly, part of the 50S ribosomal subunit.

Functionally, binds 23S rRNA and is also seen to make contacts with the A and possibly P site tRNAs. This chain is Large ribosomal subunit protein uL16, found in Mycobacterium avium (strain 104).